The following is a 57-amino-acid chain: Aminopeptidase A (57 aa).

Topologically, residues 1–57 (YLTDHYFKVDLNSTVTQQRFLLDPSELAGITIMQPSDSNIEWLKQYRDDVATWLENS) are extracellular. Asn12 is a glycosylation site (N-linked (GlcNAc...) asparagine).

The protein belongs to the peptidase M1 family. In terms of assembly, homodimer; disulfide-linked. Zn(2+) is required as a cofactor.

The protein localises to the cell membrane. The catalysed reaction is Release of N-terminal glutamate (and to a lesser extent aspartate) from a peptide.. Its activity is regulated as follows. Inhibited by the aminopeptidase competitive inhibitors amastatin (Leu and acidic inhibitor), and bestatin (Leu inhibitor), by chelating agents EDTA, and 1,10-Phenanthroline, as well as by Zn(2+) ions. Substrate specificity is modulated by Ca(2+), Ba(2+), and Mn(2+) ions which enhances the enzymatic activity for cleavage of acidic residues. In terms of biological role, venom protein that cleaves N-terminal acidic residues from peptides with high potency in presence of calcium. It may have several roles in venom including alteration of blood pressure by cleaving circulating angiotensin-2, general degradation of host tissue, increase of permeability to other venom components, and/or processing of other toxins in the venom. In Gloydius blomhoffii (Mamushi), this protein is Aminopeptidase A.